A 175-amino-acid chain; its full sequence is dATP triphosphohydrolase (175 aa).

Arg-19 serves as a coordination point for dATP. Positions 34, 66, 67, 70, 75, and 119 each coordinate Co(2+).

Belongs to the Caudovirales dATP triphosphohydrolase family. As to quaternary structure, homohexamer. It depends on Co(2+) as a cofactor. Zn(2+) is required as a cofactor.

The enzyme catalyses dATP + H2O = 2'-deoxyadenosine + triphosphate + H(+). The catalysed reaction is dADP + H2O = 2'-deoxyadenosine + diphosphate. It carries out the reaction dAMP + H2O = 2'-deoxyadenosine + phosphate. In terms of biological role, catalyzes the hydrolysis of dATP, dADP and dAMP into dA. This step is essential for Z-genome synthesis (containing aminoadenine instead of adenine). Specifically removes dATP and its precursor dADP from the nucleotide pool of the host, preventing the incorporation of A into the phage genome and favoring the integration of the Z-base into the viral genome. This is dATP triphosphohydrolase (datZ) from Cyanophage S-2L (Cyanobacteria phage S-2L).